The following is a 268-amino-acid chain: Phosphatidylglycerol--prolipoprotein diacylglyceryl transferase (268 aa).

7 helical membrane passes run 21-41, 54-74, 93-113, 122-142, 173-193, 203-223, and 236-256; these read WYGIIIVSAIALSIWLGGRFA, FAIILVPAGILGARLYEVFVL, GLAIHGAVLGGAIAAAIYLPM, ADVVGLVLPLAQAIGRWGNFF, VMHPTFLYESVWNLLTFGILL, GVVFSLYLVLYNAGRFLIESI, and VAQLVAAVLAILGLVLLAWFL. Position 137 (Arg137) interacts with a 1,2-diacyl-sn-glycero-3-phospho-(1'-sn-glycerol).

It belongs to the Lgt family.

Its subcellular location is the cell membrane. The catalysed reaction is L-cysteinyl-[prolipoprotein] + a 1,2-diacyl-sn-glycero-3-phospho-(1'-sn-glycerol) = an S-1,2-diacyl-sn-glyceryl-L-cysteinyl-[prolipoprotein] + sn-glycerol 1-phosphate + H(+). Its pathway is protein modification; lipoprotein biosynthesis (diacylglyceryl transfer). In terms of biological role, catalyzes the transfer of the diacylglyceryl group from phosphatidylglycerol to the sulfhydryl group of the N-terminal cysteine of a prolipoprotein, the first step in the formation of mature lipoproteins. In Symbiobacterium thermophilum (strain DSM 24528 / JCM 14929 / IAM 14863 / T), this protein is Phosphatidylglycerol--prolipoprotein diacylglyceryl transferase.